The sequence spans 211 residues: Adenylyl-sulfate kinase (211 aa).

An ATP-binding site is contributed by 32 to 39 (GLSASGKS). The active-site Phosphoserine intermediate is the serine 107.

The protein belongs to the APS kinase family. Homodimer.

It carries out the reaction adenosine 5'-phosphosulfate + ATP = 3'-phosphoadenylyl sulfate + ADP + H(+). It participates in sulfur metabolism; hydrogen sulfide biosynthesis; sulfite from sulfate: step 2/3. Catalyzes the synthesis of activated sulfate. The chain is Adenylyl-sulfate kinase from Penicillium chrysogenum (Penicillium notatum).